An 84-amino-acid chain; its full sequence is Putative ribosomal RNA large subunit methyltransferase H 2 (84 aa).

Residues G33 and 52 to 57 each bind S-adenosyl-L-methionine; that span reads FSKMTF.

This sequence belongs to the RNA methyltransferase RlmH family. Homodimer.

It is found in the cytoplasm. It catalyses the reaction pseudouridine(1915) in 23S rRNA + S-adenosyl-L-methionine = N(3)-methylpseudouridine(1915) in 23S rRNA + S-adenosyl-L-homocysteine + H(+). Its function is as follows. Specifically methylates the pseudouridine at position 1915 (m3Psi1915) in 23S rRNA. In Clostridium perfringens (strain SM101 / Type A), this protein is Putative ribosomal RNA large subunit methyltransferase H 2 (rlmH2).